We begin with the raw amino-acid sequence, 172 residues long: Translationally-controlled tumor protein (172 aa).

Positions 1–172 constitute a TCTP domain; sequence MIIYRDLISH…FKDGLEMEKC (172 aa). S46 is subject to Phosphoserine; by PLK1. S53 carries the post-translational modification Phosphoserine. S64 bears the Phosphoserine; by PLK1 mark. Residues 70–172 are required for reduction of TSC22D1 protein stability; sequence VDIVMNHHLQ…FKDGLEMEKC (103 aa).

It belongs to the TCTP family. As to quaternary structure, homodimer. Interacts with STEAP3. Interacts with TSC22D1; interaction results in the destabilization of TSC22D1 protein.

Its subcellular location is the cytoplasm. In terms of biological role, involved in calcium binding and microtubule stabilization. Acts as a negative regulator of TSC22D1-mediated apoptosis, via interaction with and destabilization of TSC22D1 protein. This Oryctolagus cuniculus (Rabbit) protein is Translationally-controlled tumor protein (TPT1).